We begin with the raw amino-acid sequence, 78 residues long: D-alanyl carrier protein (78 aa).

The region spanning 1–77 (MAVKEEVVEI…KVIAKVESLI (77 aa)) is the Carrier domain. O-(pantetheine 4'-phosphoryl)serine is present on Ser35.

It belongs to the DltC family. In terms of processing, 4'-phosphopantetheine is transferred from CoA to a specific serine of apo-DCP.

The protein localises to the cytoplasm. It functions in the pathway cell wall biogenesis; lipoteichoic acid biosynthesis. Functionally, carrier protein involved in the D-alanylation of lipoteichoic acid (LTA). The loading of thioester-linked D-alanine onto DltC is catalyzed by D-alanine--D-alanyl carrier protein ligase DltA. The DltC-carried D-alanyl group is further transferred to cell membrane phosphatidylglycerol (PG) by forming an ester bond, probably catalyzed by DltD. D-alanylation of LTA plays an important role in modulating the properties of the cell wall in Gram-positive bacteria, influencing the net charge of the cell wall. This is D-alanyl carrier protein from Leuconostoc citreum (strain KM20).